The following is a 428-amino-acid chain: Anaerobic glycerol-3-phosphate dehydrogenase subunit B (428 aa).

It belongs to the anaerobic G-3-P dehydrogenase subunit B family. In terms of assembly, composed of a catalytic GlpA/B dimer and of membrane bound GlpC. The cofactor is FMN.

It carries out the reaction a quinone + sn-glycerol 3-phosphate = dihydroxyacetone phosphate + a quinol. The protein operates within polyol metabolism; glycerol degradation via glycerol kinase pathway; glycerone phosphate from sn-glycerol 3-phosphate (anaerobic route): step 1/1. Its function is as follows. Conversion of glycerol 3-phosphate to dihydroxyacetone. Uses fumarate or nitrate as electron acceptor. The chain is Anaerobic glycerol-3-phosphate dehydrogenase subunit B from Actinobacillus pleuropneumoniae serotype 5b (strain L20).